We begin with the raw amino-acid sequence, 201 residues long: MSRYRGPRFKKIRRLGALPGLTSKRPRSGSDFKNQSRFGKKSQYRIRLEEKQKLRFHYGLTEQQLLRYVHIAGKAKGSTDQVLLQLLEMRLDNILFRLGMASTIPAARQLVNHRHILVNGRIVDIPSYRCKPRDIITSKDKQRSKVLIQNSIESSPHEELPKHLTIDSFQYKGLVNQIIDSKLIGLKINELLVVEYYSRQT.

The S4 RNA-binding domain occupies 89-150; that stretch reads MRLDNILFRL…KQRSKVLIQN (62 aa).

This sequence belongs to the universal ribosomal protein uS4 family. In terms of assembly, part of the 30S ribosomal subunit. Contacts protein S5. The interaction surface between S4 and S5 is involved in control of translational fidelity.

It localises to the plastid. It is found in the chloroplast. Its function is as follows. One of the primary rRNA binding proteins, it binds directly to 16S rRNA where it nucleates assembly of the body of the 30S subunit. In terms of biological role, with S5 and S12 plays an important role in translational accuracy. This Dioscorea elephantipes (Elephant's foot yam) protein is Small ribosomal subunit protein uS4c (rps4).